Consider the following 238-residue polypeptide: Uridylate kinase (238 aa).

Position 13–16 (K13–G16) interacts with ATP. G53 lines the UMP pocket. G54 and R58 together coordinate ATP. UMP is bound by residues D73 and A134–T141. N162, Y168, and D171 together coordinate ATP.

Belongs to the UMP kinase family. In terms of assembly, homohexamer.

It is found in the cytoplasm. It catalyses the reaction UMP + ATP = UDP + ADP. Its pathway is pyrimidine metabolism; CTP biosynthesis via de novo pathway; UDP from UMP (UMPK route): step 1/1. Its activity is regulated as follows. Inhibited by UTP. In terms of biological role, catalyzes the reversible phosphorylation of UMP to UDP. The protein is Uridylate kinase of Clavibacter michiganensis subsp. michiganensis (strain NCPPB 382).